The primary structure comprises 295 residues: HTH-type transcriptional regulator ShiR (295 aa).

The HTH lysR-type domain occupies 1-58; that stretch reads MEIRWLEGFIAVAEELHFSNAAIRLGMPQSPLSQLIRRLESELGQKLFDRSTRSVELT. A DNA-binding region (H-T-H motif) is located at residues 18–37; it reads FSNAAIRLGMPQSPLSQLIR.

The protein belongs to the LysR transcriptional regulatory family.

Activates expression of the shikimate transporter ShiA in the presence of shikimate. Binds to the shiA promoter region. The sequence is that of HTH-type transcriptional regulator ShiR from Corynebacterium glutamicum (strain R).